Reading from the N-terminus, the 61-residue chain is Large ribosomal subunit protein bL28 (61 aa).

Positions Met-1–Met-21 are disordered.

Belongs to the bacterial ribosomal protein bL28 family.

This chain is Large ribosomal subunit protein bL28, found in Lactobacillus helveticus (strain DPC 4571).